An 808-amino-acid chain; its full sequence is MVSDMLGGNKRWILFGLLSFLLNCVLVSCSVEDIEKAANDSFLWGPYRPNLYVGIRPKIPDSLMTGLMWSNVDDYARFSKMRHSAEHGDDIGAFGWKHYDVRRGGQQVIDDFLMGIKLETDFVKLPEGNWALRVHGIPLPGAPTDLTTSLFFYAYVEGEGKVGTKVNHANHVYMEGKTPDLGKFRIQTFNRLGEHPVSPASVDLESMVMDKDFFAGFNVKKEGAWRTSELILYLLDTKMKVISDKEGYESLKDLPPAYSTLTLPNLPSEEGLQFIQKVFKGEFMFDIVFNYASSKKISEEMISQAIDKNLQEFEEKFQATFPLKAPYDTEKAHQIFAHTAFSNLFGNVGFFTGDSIVSKNPIELDDEDYEFMQGFESAAGKLAEGTAFHDIERSLFTIVPSRPHFPRGFYWDEGFHLLPVGLWDNDFSLEILKSWFSLVNEDGWVGREQILGEEARSKVPDEFQTQYPDIANPPTLILALKGYIERLQEQQGKLNNRFSGEGEDYSLDDLEYLRSVSISNPEKSVQFLRDLFPLLLRHYEWFRETQKGDFETWERECFSQVEGYRWRGRTYQHCLASGLDDYPRAQPPSTAELHVDLLSWMTSFTRSLHFVAEFLGETEEAEKLAGYENAMLRNLEDNHWDEEVQAYCDSSVDEYDDPINVCHKGYVTLLPMMLGLLPADSGRLTSLLKLIRDENELWSPYGIRSLSMNDVYFGTGENYWRGPIWINMNYLILSSLYQNYINTPGPNQNLARSIYEELRTNVVNNVFENWRQTGIFWEQYDPTTGKGQRTKDFTGWTSLVVNIMSENY.

The Cytoplasmic portion of the chain corresponds to 1–11 (MVSDMLGGNKR). The chain crosses the membrane as a helical; Signal-anchor for type II membrane protein span at residues 12-31 (WILFGLLSFLLNCVLVSCSV). The Lumenal segment spans residues 32 to 808 (EDIEKAANDS…LVVNIMSENY (777 aa)). Residue asparagine 39 is glycosylated (N-linked (GlcNAc...) asparagine). Aspartate 580 (proton donor) is an active-site residue. Residue glutamate 778 is the Proton acceptor of the active site.

It belongs to the glycosyl hydrolase 63 family.

The protein resides in the endoplasmic reticulum membrane. The enzyme catalyses N(4)-(alpha-D-Glc-(1-&gt;2)-alpha-D-Glc-(1-&gt;3)-alpha-D-Glc-(1-&gt;3)-alpha-D-Man-(1-&gt;2)-alpha-D-Man-(1-&gt;2)-alpha-D-Man-(1-&gt;3)-[alpha-D-Man-(1-&gt;2)-alpha-D-Man-(1-&gt;3)-[alpha-D-Man-(1-&gt;2)-alpha-D-Man-(1-&gt;6)]-alpha-D-Man-(1-&gt;6)]-beta-D-Man-(1-&gt;4)-beta-D-GlcNAc-(1-&gt;4)-beta-D-GlcNAc)-L-asparaginyl-[protein] + H2O = N(4)-(alpha-D-Glc-(1-&gt;3)-alpha-D-Glc-(1-&gt;3)-alpha-D-Man-(1-&gt;2)-alpha-D-Man-(1-&gt;2)-alpha-D-Man-(1-&gt;3)-[alpha-D-Man-(1-&gt;2)-alpha-D-Man-(1-&gt;3)-[alpha-D-Man-(1-&gt;2)-alpha-D-Man-(1-&gt;6)]-alpha-D-Man-(1-&gt;6)]-beta-D-Man-(1-&gt;4)-beta-D-GlcNAc-(1-&gt;4)-beta-D-GlcNAc)-L-asparaginyl-[protein] + beta-D-glucose. Cleaves the distal alpha 1,2-linked glucose residue from the Glc(3)Man(9)GlcNAc(2) oligosaccharide precursor highly specifically. The chain is Probable mannosyl-oligosaccharide glucosidase from Schizosaccharomyces pombe (strain 972 / ATCC 24843) (Fission yeast).